Reading from the N-terminus, the 208-residue chain is Uracil phosphoribosyltransferase (208 aa).

Residues R78, R103, and 130-138 each bind 5-phospho-alpha-D-ribose 1-diphosphate; that span reads DPMLATANS. Uracil is bound by residues I193 and 198-200; that span reads GDA. D199 lines the 5-phospho-alpha-D-ribose 1-diphosphate pocket.

This sequence belongs to the UPRTase family. Mg(2+) serves as cofactor.

The catalysed reaction is UMP + diphosphate = 5-phospho-alpha-D-ribose 1-diphosphate + uracil. The protein operates within pyrimidine metabolism; UMP biosynthesis via salvage pathway; UMP from uracil: step 1/1. Allosterically activated by GTP. Catalyzes the conversion of uracil and 5-phospho-alpha-D-ribose 1-diphosphate (PRPP) to UMP and diphosphate. The sequence is that of Uracil phosphoribosyltransferase from Brucella abortus biovar 1 (strain 9-941).